The primary structure comprises 610 residues: Estrogen receptor beta-2 (610 aa).

The tract at residues 1–170 (MSSSTGPAPA…GILGKGDTHF (170 aa)) is modulating. 2 NR C4-type zinc fingers span residues 171–191 (CAVCHDYASGYHYGVWSCEGC) and 207–231 (CPATNQCTIDKSRRKSCQACRLRKC). The nuclear receptor DNA-binding region spans 171 to 236 (CAVCHDYASG…RLRKCYEVGM (66 aa)). Positions 302–538 (SPEQLVNCIL…DLLLEMLDAN (237 aa)) constitute an NR LBD domain. The segment at 566–596 (HTSKQQPALKESNQDTRHSPQAEGTVDKTLH) is disordered. Residues 577–596 (SNQDTRHSPQAEGTVDKTLH) show a composition bias toward basic and acidic residues.

The protein belongs to the nuclear hormone receptor family. NR3 subfamily. Binds DNA as a homodimer. Can form a heterodimer with ER-alpha. Predominantly expressed in pituitary, telencephalon and hypothalamus as well as in the liver.

Its subcellular location is the nucleus. In terms of biological role, binds estrogens with an affinity similar to that of ER-alpha, and activates expression of reporter genes containing estrogen response elements (ERE) in an estrogen-dependent manner. This Carassius auratus (Goldfish) protein is Estrogen receptor beta-2 (esr2b).